The following is a 265-amino-acid chain: Palmitoyltransferase ZDHHC21 (265 aa).

Residues 1–16 are Cytoplasmic-facing; the sequence is MGLRIHFVVDPHGWCC. A helical transmembrane segment spans residues 17–37; the sequence is MGLIVFVWLYNIVLIPKIVLF. Topologically, residues 38 to 44 are extracellular; that stretch reads PHYEEGH. A helical transmembrane segment spans residues 45-65; that stretch reads IPGILIIIFYGISIFCLVALV. Residues 66–133 are Cytoplasmic-facing; sequence RASITDPGRL…NNCVGEDNHW (68 aa). One can recognise a DHHC domain in the interval 90–140; that stretch reads ELCNKCNLMRPKRSHHCSRCGHCVRRMDHHCPWINNCVGEDNHWLFLQLCF. Residue Cys-120 is the S-palmitoyl cysteine intermediate of the active site. Residues 134–154 traverse the membrane as a helical segment; it reads LFLQLCFYTELLTCYALMFSF. The Extracellular segment spans residues 155 to 185; that stretch reads CHYYYFLPLKKRNLDLFVFRHELAIMRLAAF. Residues 186-206 form a helical membrane-spanning segment; the sequence is MGITMLVGITGLFYTQLIGII. Residues 207 to 265 lie on the Cytoplasmic side of the membrane; it reads TDTTSIEKMSNCCEDISRPRKPWQQTFSEVFGTRWKILWFIPFRQRQPLRVPYHFANHV.

It belongs to the DHHC palmitoyltransferase family. As to expression, widely expressed.

The protein resides in the golgi apparatus membrane. It localises to the golgi apparatus. The protein localises to the cis-Golgi network membrane. It is found in the cell membrane. It catalyses the reaction L-cysteinyl-[protein] + hexadecanoyl-CoA = S-hexadecanoyl-L-cysteinyl-[protein] + CoA. In terms of biological role, palmitoyltransferase that catalyzes the addition of palmitate onto various protein substrates. Palmitoylates sex steroid hormone receptors, including ESR1, PGR and AR, thereby regulating their targeting to the plasma membrane. This affects rapid intracellular signaling by sex hormones via ERK and AKT kinases and the generation of cAMP, but does not affect that mediated by their nuclear receptor. Palmitoylates FYN, regulates its localization in hair follicles and plays a key role in epidermal homeostasis and hair follicle differentiation. Through the palmitoylation of PLCB1 and the regulation of PLCB1 downstream signaling may indirectly regulate the function of the endothelial barrier and the adhesion of leukocytes to the endothelium. Also has a palmitoyltransferase activity toward ADRA1D, positively regulating its activity and expression and may thereby play a role in vascular contraction. May also palmitoylate eNOS and LCK. This is Palmitoyltransferase ZDHHC21 from Homo sapiens (Human).